A 34-amino-acid chain; its full sequence is Unknown protein 5 (34 aa).

In Pseudotsuga menziesii (Douglas-fir), this protein is Unknown protein 5.